Reading from the N-terminus, the 320-residue chain is Phosphatidylserine decarboxylase proenzyme (320 aa).

Residues D90, H147, and S254 each act as charge relay system; for autoendoproteolytic cleavage activity in the active site. The active-site Schiff-base intermediate with substrate; via pyruvic acid; for decarboxylase activity is S254. A Pyruvic acid (Ser); by autocatalysis modification is found at S254. The segment at 288 to 320 (EASTAAEPAPLPEEEIRAEHRASPLVDDTQDQG) is disordered.

Belongs to the phosphatidylserine decarboxylase family. PSD-B subfamily. Prokaryotic type I sub-subfamily. In terms of assembly, heterodimer of a large membrane-associated beta subunit and a small pyruvoyl-containing alpha subunit. Pyruvate is required as a cofactor. Post-translationally, is synthesized initially as an inactive proenzyme. Formation of the active enzyme involves a self-maturation process in which the active site pyruvoyl group is generated from an internal serine residue via an autocatalytic post-translational modification. Two non-identical subunits are generated from the proenzyme in this reaction, and the pyruvate is formed at the N-terminus of the alpha chain, which is derived from the carboxyl end of the proenzyme. The autoendoproteolytic cleavage occurs by a canonical serine protease mechanism, in which the side chain hydroxyl group of the serine supplies its oxygen atom to form the C-terminus of the beta chain, while the remainder of the serine residue undergoes an oxidative deamination to produce ammonia and the pyruvoyl prosthetic group on the alpha chain. During this reaction, the Ser that is part of the protease active site of the proenzyme becomes the pyruvoyl prosthetic group, which constitutes an essential element of the active site of the mature decarboxylase.

It localises to the cell membrane. The enzyme catalyses a 1,2-diacyl-sn-glycero-3-phospho-L-serine + H(+) = a 1,2-diacyl-sn-glycero-3-phosphoethanolamine + CO2. It participates in phospholipid metabolism; phosphatidylethanolamine biosynthesis; phosphatidylethanolamine from CDP-diacylglycerol: step 2/2. Catalyzes the formation of phosphatidylethanolamine (PtdEtn) from phosphatidylserine (PtdSer). The sequence is that of Phosphatidylserine decarboxylase proenzyme from Klebsiella pneumoniae (strain 342).